The sequence spans 339 residues: NADPH dehydrogenase (339 aa).

Residue 24-27 (SPMC) coordinates FMN. Tyr-29 is a substrate binding site. Residues Ala-61 and Gln-103 each coordinate FMN. 165–168 (HGAH) is a binding site for substrate. FMN contacts are provided by residues Arg-216 and 308–309 (AR).

The protein belongs to the NADH:flavin oxidoreductase/NADH oxidase family. NamA subfamily. In terms of assembly, homotetramer. The cofactor is FMN.

The enzyme catalyses A + NADPH + H(+) = AH2 + NADP(+). In terms of biological role, catalyzes the reduction of the double bond of an array of alpha,beta-unsaturated aldehydes and ketones. It also reduces the nitro group of nitroester and nitroaromatic compounds. It could have a role in detoxification processes. This chain is NADPH dehydrogenase, found in Bacillus licheniformis (strain ATCC 14580 / DSM 13 / JCM 2505 / CCUG 7422 / NBRC 12200 / NCIMB 9375 / NCTC 10341 / NRRL NRS-1264 / Gibson 46).